The sequence spans 366 residues: Capsular polysaccharide phosphotransferase LcbA (366 aa).

The protein belongs to the stealth family.

This Neisseria meningitidis protein is Capsular polysaccharide phosphotransferase LcbA (lcbA).